The primary structure comprises 42 residues: MSNSENTGRIPLWLVLTIIGLAAIALLALFFYGSYSGLGSSL.

Residues 10-30 (IPLWLVLTIIGLAAIALLALF) traverse the membrane as a helical segment.

The protein belongs to the PsbJ family. In terms of assembly, PSII is composed of 1 copy each of membrane proteins PsbA, PsbB, PsbC, PsbD, PsbE, PsbF, PsbH, PsbI, PsbJ, PsbK, PsbL, PsbM, PsbT, PsbY, PsbZ, Psb30/Ycf12, at least 3 peripheral proteins of the oxygen-evolving complex and a large number of cofactors. It forms dimeric complexes.

It is found in the plastid. Its subcellular location is the chloroplast thylakoid membrane. Functionally, this protein is a component of the reaction center of photosystem II. One of the components of the core complex of photosystem II (PSII). PSII is a light-driven water:plastoquinone oxidoreductase that uses light energy to abstract electrons from H(2)O, generating O(2) and a proton gradient subsequently used for ATP formation. It consists of a core antenna complex that captures photons, and an electron transfer chain that converts photonic excitation into a charge separation. The sequence is that of Photosystem II reaction center protein J from Euglena gracilis.